We begin with the raw amino-acid sequence, 513 residues long: 2-isopropylmalate synthase (513 aa).

Residues 5 to 268 (LIIFDTTLRD…DLRVDTSQIV (264 aa)) enclose the Pyruvate carboxyltransferase domain. 4 residues coordinate Mn(2+): Asp14, His202, His204, and Asn239. Residues 394-513 (RLLALSQHSE…SKAERVAAQG (120 aa)) form a regulatory domain region.

It belongs to the alpha-IPM synthase/homocitrate synthase family. LeuA type 1 subfamily. Homodimer. Mn(2+) serves as cofactor.

The protein localises to the cytoplasm. The catalysed reaction is 3-methyl-2-oxobutanoate + acetyl-CoA + H2O = (2S)-2-isopropylmalate + CoA + H(+). The protein operates within amino-acid biosynthesis; L-leucine biosynthesis; L-leucine from 3-methyl-2-oxobutanoate: step 1/4. Functionally, catalyzes the condensation of the acetyl group of acetyl-CoA with 3-methyl-2-oxobutanoate (2-ketoisovalerate) to form 3-carboxy-3-hydroxy-4-methylpentanoate (2-isopropylmalate). The sequence is that of 2-isopropylmalate synthase from Leptothrix cholodnii (strain ATCC 51168 / LMG 8142 / SP-6) (Leptothrix discophora (strain SP-6)).